Here is a 338-residue protein sequence, read N- to C-terminus: Aspartate carbamoyltransferase catalytic subunit (338 aa).

Carbamoyl phosphate-binding residues include Arg59 and Thr60. Lys87 serves as a coordination point for L-aspartate. Carbamoyl phosphate-binding residues include Arg109, His142, and Gln145. Arg182 and Arg253 together coordinate L-aspartate. The carbamoyl phosphate site is built by Gly294 and Pro295.

Belongs to the aspartate/ornithine carbamoyltransferase superfamily. ATCase family. Heterododecamer (2C3:3R2) of six catalytic PyrB chains organized as two trimers (C3), and six regulatory PyrI chains organized as three dimers (R2).

It catalyses the reaction carbamoyl phosphate + L-aspartate = N-carbamoyl-L-aspartate + phosphate + H(+). Its pathway is pyrimidine metabolism; UMP biosynthesis via de novo pathway; (S)-dihydroorotate from bicarbonate: step 2/3. Its function is as follows. Catalyzes the condensation of carbamoyl phosphate and aspartate to form carbamoyl aspartate and inorganic phosphate, the committed step in the de novo pyrimidine nucleotide biosynthesis pathway. The sequence is that of Aspartate carbamoyltransferase catalytic subunit from Prochlorococcus marinus subsp. pastoris (strain CCMP1986 / NIES-2087 / MED4).